Consider the following 613-residue polypeptide: Glutaminase 1 (613 aa).

The tract at residues 33–315 (GAVADYIPEL…LSSHYDLHML (283 aa)) is glutaminase. Residues Ser75, Asn124, Glu168, Asn175, Tyr199, Tyr251, and Val269 each coordinate substrate. The region spanning 345–457 (REILAAHEQE…LDTAIEWAED (113 aa)) is the STAS domain. 480–595 (LLEGLSADEL…ERIMRNLAQL (116 aa)) serves as a coordination point for a nucleoside 3',5'-cyclic phosphate.

This sequence belongs to the glutaminase family. Homotetramer.

The catalysed reaction is L-glutamine + H2O = L-glutamate + NH4(+). This Bradyrhizobium diazoefficiens (strain JCM 10833 / BCRC 13528 / IAM 13628 / NBRC 14792 / USDA 110) protein is Glutaminase 1 (glsA1).